Here is a 120-residue protein sequence, read N- to C-terminus: Large ribosomal subunit protein bL19 (120 aa).

The protein belongs to the bacterial ribosomal protein bL19 family.

This protein is located at the 30S-50S ribosomal subunit interface and may play a role in the structure and function of the aminoacyl-tRNA binding site. In Rippkaea orientalis (strain PCC 8801 / RF-1) (Cyanothece sp. (strain PCC 8801)), this protein is Large ribosomal subunit protein bL19.